Here is a 148-residue protein sequence, read N- to C-terminus: Large ribosomal subunit protein bL9 (148 aa).

The protein belongs to the bacterial ribosomal protein bL9 family.

Binds to the 23S rRNA. In Frankia alni (strain DSM 45986 / CECT 9034 / ACN14a), this protein is Large ribosomal subunit protein bL9.